A 337-amino-acid polypeptide reads, in one-letter code: Fructose-1,6-bisphosphatase class 1 (337 aa).

Residues E89, D112, L114, and D115 each contribute to the Mg(2+) site. Residues 115 to 118 (DGSS), N208, Y241, and K271 each bind substrate. A Mg(2+)-binding site is contributed by E277.

This sequence belongs to the FBPase class 1 family. In terms of assembly, homotetramer. Mg(2+) is required as a cofactor.

The protein resides in the cytoplasm. It carries out the reaction beta-D-fructose 1,6-bisphosphate + H2O = beta-D-fructose 6-phosphate + phosphate. It participates in carbohydrate biosynthesis; gluconeogenesis. The sequence is that of Fructose-1,6-bisphosphatase class 1 from Yersinia pseudotuberculosis serotype O:1b (strain IP 31758).